Consider the following 605-residue polypeptide: Probable potassium transport system protein Kup 3 (605 aa).

The next 12 membrane-spanning stretches (helical) occupy residues 16–36 (ALGL…TVIF), 49–69 (ILSL…AWLA), 97–117 (VAFA…DAVI), 138–158 (GLST…LFSV), 170–190 (FGPI…VSAF), 212–232 (GLAG…GEAL), 247–267 (AWHF…VFAI), 287–307 (LYIP…QAII), 339–359 (IYLG…MLVF), 368–388 (AYGM…IIVF), 397–417 (ALVA…TFSK), and 418–438 (LPHG…TIII).

It belongs to the HAK/KUP transporter (TC 2.A.72) family.

The protein localises to the cell inner membrane. It carries out the reaction K(+)(in) + H(+)(in) = K(+)(out) + H(+)(out). Transport of potassium into the cell. Likely operates as a K(+):H(+) symporter. This is Probable potassium transport system protein Kup 3 from Geobacter sulfurreducens (strain ATCC 51573 / DSM 12127 / PCA).